The primary structure comprises 156 residues: Small ribosomal subunit protein uS7 (156 aa).

It belongs to the universal ribosomal protein uS7 family. Part of the 30S ribosomal subunit. Contacts proteins S9 and S11.

In terms of biological role, one of the primary rRNA binding proteins, it binds directly to 16S rRNA where it nucleates assembly of the head domain of the 30S subunit. Is located at the subunit interface close to the decoding center, probably blocks exit of the E-site tRNA. This is Small ribosomal subunit protein uS7 from Carsonella ruddii (strain PV).